A 214-amino-acid chain; its full sequence is STS14 protein (214 aa).

Positions 1 to 19 are cleaved as a signal peptide; it reads MFVLSTAMACLVYIYIYIY. Tandem repeats lie at residues 13–14, 15–16, and 17–18. The interval 13-18 is 3 X 2 AA tandem repeats of Y-I; the sequence is YIYIYI. One can recognise an SCP domain in the interval 80–200; sequence LDAHNKARSE…YEGPATLTVC (121 aa).

This sequence belongs to the CRISP family. In terms of tissue distribution, highly expressed in the stigma and stylar cortex throughout pistil development. Not expressed in other organs.

In terms of biological role, may protect the outer tissues of the pistil from pathogen attack. The sequence is that of STS14 protein (STS14) from Solanum tuberosum (Potato).